The following is a 543-amino-acid chain: Small conductance calcium-activated potassium channel protein 1 (543 aa).

The segment at 1 to 92 is disordered; the sequence is MNSHSYNGSV…SGKPSNVGHR (92 aa). The span at 65–76 shows a compositional bias: acidic residues; it reads DQDDDEDDEEDE. A helical transmembrane segment spans residues 111-131; sequence LIFGMFGIVVMVTETELSWGV. A helical membrane pass occupies residues 140 to 160; it reads FALKCLISLSTAILLGLVVLY. A helical membrane pass occupies residues 179-199; it reads IAMTCERVFLISLELAVCAIH. A helical membrane pass occupies residues 228–248; that stretch reads VLLSIPMFLRLYLLGRVMLLH. The chain crosses the membrane as a helical span at residues 277–297; sequence LMTICPGTVLLVFSISSWIIA. An intramembrane region (pore-forming) is located at residues 317 to 337; that stretch reads FLGAMWLISITFLSIGYGDMV. The helical transmembrane segment at 346-366 threads the bilayer; it reads VCLLTGIMGAGCTALVVAVVA. The interval 384–463 is calmodulin-binding; that stretch reads DTQLTKRVKN…LTDLAKTQTV (80 aa). A disordered region spans residues 505–543; it reads QAIRPPPPPLPPRPGPGPQDQAARSSPCRWTPVAPSDCG. Residues 508–521 show a composition bias toward pro residues; sequence RPPPPPLPPRPGPG.

It belongs to the potassium channel KCNN family. KCa2.1/KCNN1 subfamily. In terms of assembly, homodimer. Heteromultimer with KCNN2 and KCNN3. The complex is composed of 4 channel subunits each of which binds to a calmodulin subunit which regulates the channel activity through calcium-binding. Interacts with calmodulin.

The protein resides in the membrane. It is found in the cytoplasm. Its subcellular location is the myofibril. It localises to the sarcomere. The protein localises to the z line. It catalyses the reaction K(+)(in) = K(+)(out). With respect to regulation, inhibited by bee venom neurotoxin apamin. Inhibited by d-tubocurarine and tetraethylammonium (TEA). In terms of biological role, small conductance calcium-activated potassium channel that mediates the voltage-independent transmembrane transfer of potassium across the cell membrane through a constitutive interaction with calmodulin which binds the intracellular calcium allowing its opening. The current is characterized by a voltage-independent activation, an intracellular calcium concentration increase-dependent activation and a single-channel conductance of about 3 picosiemens. Also presents an inwardly rectifying current, thus reducing its already small outward conductance of potassium ions, which is particularly the case when the membrane potential displays positive values, above + 20 mV. Activation is followed by membrane hyperpolarization. Thought to regulate neuronal excitability by contributing to the slow component of synaptic afterhyperpolarization. The chain is Small conductance calcium-activated potassium channel protein 1 from Homo sapiens (Human).